The following is an 881-amino-acid chain: MKAVVRVLKLEERAVHRQQNRPPAVQGSQHQSHSPACMNPALMSSPWVRQKHGGRAIPNRLCLSTTDSPHSYRYQDDDSPPPEHSFPRLTNEVRAPELVHVSEKNLSEIENVHGYVSHSHISPLKASPAPIIVNTDTLESVPYVNGTEIEYEFEEITLERGNSGLGFSIAGGTDNPHIGDDPGIFITKIIPGGAAAEDGRLRVNDCILRVNESDVSEVSHSKAVEALKAAGSIVRLYVRRRRPMLETVTEIKLIKGPKGLGFSIAGGVGNQHIPGDNSIYVTKIIDGGAAQKDGRLQVGDRLLMVNNYTLEEVTHEEAVAILKNTSDVVYLKVGKPTSVYLSDPYGPPDITHSFSPAMENHISSPGNNGTLEYKSSLPPISPGRYSPLPKHLLGEEDINRNPSLDEMEGHRFDSQHFQLREPRKIVLHKGSTGLGFNIVGGEDGEGIFVSFILAGGPADLSGELRRGDQILSVNGIDLRGATHEQAAAALKGAGQTVTIIAQYRPEEYGRFEAKIHDLREQMMNHSMSSGSGSLRTNQKRSLYVRALFDYERAKDSGLPSQGLSFRYGDILHVINASDDEWWQARRVTPEGDSEEMGVIPSKRRVERKERARLKTVKFNAKPGSLDSKGSFSEKRRKNFIFSRKFPFYKNKDADEQDGSDSERSQEELILSYEPVIRQEINYARPVIILGPMKDRINDDLISEFPDKFGSCVPPANSSDQEDTTRPKRDYEVDGRDYHFMASREQMEKDIQEHKFIEAGQYNDNLYGTSVQSVKYVAERGKHCILDVSGNAIKRLQVAQLYPIAIFIKPRSIESLMEMNKRLTEEQAKKTYDRAMKLEQEFGEYFTALVQGDTLEDIYNQCKMVIEEQSGPYIWIPSKEKL.

Disordered regions lie at residues 16 to 41 (HRQQ…MNPA) and 63 to 88 (LSTT…SFPR). PDZ domains are found at residues 155 to 242 (EITL…RRRR), 250 to 337 (EIKL…GKPT), and 424 to 505 (KIVL…QYRP). In terms of domain architecture, SH3 spans 539–609 (KRSLYVRALF…PSKRRVERKE (71 aa)). The 184-residue stretch at 683-866 (ARPVIILGPM…IYNQCKMVIE (184 aa)) folds into the Guanylate kinase-like domain. The tract at residues 709–729 (GSCVPPANSSDQEDTTRPKRD) is disordered.

It belongs to the MAGUK family.

It localises to the cell membrane. Its subcellular location is the postsynaptic density. It is found in the synapse. The protein localises to the membrane. The protein resides in the cell projection. It localises to the axon. Its subcellular location is the perikaryon. Functionally, may play a role in synapse assembly and function. The polypeptide is Disks large homolog 2 (dlg2) (Danio rerio (Zebrafish)).